The chain runs to 195 residues: HTH-type transcriptional regulator BetI (195 aa).

One can recognise an HTH tetR-type domain in the interval 8–68; that stretch reads EIRRAQLIDA…ATMRHVLRDL (61 aa). The H-T-H motif DNA-binding region spans 31-50; the sequence is TLASVAQRANISTGIVSHYF.

It functions in the pathway amine and polyamine biosynthesis; betaine biosynthesis via choline pathway [regulation]. Its function is as follows. Repressor involved in the biosynthesis of the osmoprotectant glycine betaine. It represses transcription of the choline transporter BetT and the genes of BetAB involved in the synthesis of glycine betaine. The chain is HTH-type transcriptional regulator BetI from Burkholderia mallei (strain NCTC 10247).